The following is a 664-amino-acid chain: Putative peroxisomal acyl-coenzyme A oxidase 1.2 (664 aa).

399 to 404 is an FAD binding site; that stretch reads CGGHGY. A Microbody targeting signal motif is present at residues 662-664; the sequence is AKL.

It belongs to the acyl-CoA oxidase family. The cofactor is FAD.

The protein localises to the peroxisome. It carries out the reaction a 2,3-saturated acyl-CoA + O2 = a (2E)-enoyl-CoA + H2O2. Its function is as follows. Catalyzes the desaturation of acyl-CoAs to 2-trans-enoyl-CoAs. This Arabidopsis thaliana (Mouse-ear cress) protein is Putative peroxisomal acyl-coenzyme A oxidase 1.2 (ACX1.2).